The primary structure comprises 228 residues: Aquaporin Z (228 aa).

5 helical membrane passes run 1-21 (MLNK…GGCG), 46-66 (TVLT…NPAV), 82-102 (IPYW…LYVI), 129-149 (MMAG…IILG), and 154-174 (LAPA…IHLV). Positions 63 to 65 (NPA) match the NPA 1 motif. The NPA 2 signature appears at 184 to 186 (NPA). The helical transmembrane segment at 205–225 (LFWVAPLVGAVIGAIIWKGLL) threads the bilayer.

This sequence belongs to the MIP/aquaporin (TC 1.A.8) family. In terms of assembly, homotetramer.

It localises to the cell inner membrane. It carries out the reaction H2O(in) = H2O(out). Channel that permits osmotically driven movement of water in both directions. It is involved in the osmoregulation and in the maintenance of cell turgor during volume expansion in rapidly growing cells. It mediates rapid entry or exit of water in response to abrupt changes in osmolarity. This is Aquaporin Z from Brucella suis biovar 1 (strain 1330).